Here is an 868-residue protein sequence, read N- to C-terminus: Translation initiation factor IF-2 (868 aa).

Disordered regions lie at residues 158–178 and 200–269; these read VKEE…DELT and KKEE…KYRE. The segment covering 200-209 has biased composition (basic and acidic residues); the sequence is KKEEVKPEKV. Basic residues predominate over residues 249–260; it reads RGGRSKFKKKKG. The region spanning 368-537 is the tr-type G domain; it reads GRAPVVTIMG…LLQSEVLELK (170 aa). The tract at residues 377-384 is G1; it reads GHVDHGKT. 377–384 serves as a coordination point for GTP; it reads GHVDHGKT. Residues 402 to 406 form a G2 region; that stretch reads GITQH. The G3 stretch occupies residues 423–426; it reads DTPG. GTP is bound by residues 423 to 427 and 477 to 480; these read DTPGH and NKMD. The G4 stretch occupies residues 477–480; the sequence is NKMD. Residues 513-515 are G5; sequence SAK.

It belongs to the TRAFAC class translation factor GTPase superfamily. Classic translation factor GTPase family. IF-2 subfamily.

The protein resides in the cytoplasm. Its function is as follows. One of the essential components for the initiation of protein synthesis. Protects formylmethionyl-tRNA from spontaneous hydrolysis and promotes its binding to the 30S ribosomal subunits. Also involved in the hydrolysis of GTP during the formation of the 70S ribosomal complex. In Legionella pneumophila (strain Lens), this protein is Translation initiation factor IF-2.